Here is a 248-residue protein sequence, read N- to C-terminus: PF03932 family protein CutC (248 aa).

The protein belongs to the CutC family. As to quaternary structure, homodimer.

It localises to the cytoplasm. The sequence is that of PF03932 family protein CutC from Shigella boydii serotype 4 (strain Sb227).